The sequence spans 346 residues: Phosphoribosylformylglycinamidine cyclo-ligase (346 aa).

This sequence belongs to the AIR synthase family.

It is found in the cytoplasm. It catalyses the reaction 2-formamido-N(1)-(5-O-phospho-beta-D-ribosyl)acetamidine + ATP = 5-amino-1-(5-phospho-beta-D-ribosyl)imidazole + ADP + phosphate + H(+). It participates in purine metabolism; IMP biosynthesis via de novo pathway; 5-amino-1-(5-phospho-D-ribosyl)imidazole from N(2)-formyl-N(1)-(5-phospho-D-ribosyl)glycinamide: step 2/2. The chain is Phosphoribosylformylglycinamidine cyclo-ligase from Bacillus pumilus (strain SAFR-032).